The following is a 188-amino-acid chain: dCTP deaminase (188 aa).

Residues 111 to 116 (KSTYAR), 135 to 137 (TLE), Gln-156, Tyr-170, and Gln-180 contribute to the dCTP site. Glu-137 (proton donor/acceptor) is an active-site residue.

Belongs to the dCTP deaminase family. In terms of assembly, homotrimer.

The enzyme catalyses dCTP + H2O + H(+) = dUTP + NH4(+). Its pathway is pyrimidine metabolism; dUMP biosynthesis; dUMP from dCTP (dUTP route): step 1/2. In terms of biological role, catalyzes the deamination of dCTP to dUTP. The polypeptide is dCTP deaminase (Legionella pneumophila (strain Paris)).